The chain runs to 250 residues: Small ribosomal subunit protein uS3 (250 aa).

The KH type-2 domain maps to 39–109; the sequence is IRNYVQARLK…EVKIDVVEVI (71 aa). Residues 225–239 show a composition bias toward basic and acidic residues; the sequence is INERRGDSKSRPRDP. Residues 225 to 250 form a disordered region; the sequence is INERRGDSKSRPRDPRNKRRRRTKRS. A compositionally biased stretch (basic residues) spans 240-250; it reads RNKRRRRTKRS.

Belongs to the universal ribosomal protein uS3 family. In terms of assembly, part of the 30S ribosomal subunit. Forms a tight complex with proteins S10 and S14.

Its function is as follows. Binds the lower part of the 30S subunit head. Binds mRNA in the 70S ribosome, positioning it for translation. The protein is Small ribosomal subunit protein uS3 of Chlorobium phaeobacteroides (strain DSM 266 / SMG 266 / 2430).